Here is a 550-residue protein sequence, read N- to C-terminus: MFCVQCEQTIRTPAGNGCSYAQGMCGKTAETSDLQDLLIAALQGLSAWAVKAREYGIINHDVDSFAPRAFFSTLTNVNFDSPRIVGYAREAIALREALKAQCLAVDANARVDNPMADLQLVSDDLGELQRQAAEFTPNKDKAAIGENILGLRLLCLYGLKGAAAYMEHAHVLGQYDNDIYAQYHKIMAWLGTWPADMNALLECSMEIGQMNFKVMSILDAGETGKYGHPTPTQVNVKATAGKCILISGHDLKDLYNLLEQTEGTGVNVYTHGEMLPAHGYPELRKFKHLVGNYGSGWQNQQVEFARFPGPIVMTSNCIIDPTVGAYDDRIWTRSIVGWPGVRHLDGEDFSAVIAQAQQMAGFPYSEIPHLITVGFGRQTLLGAADTLIDLVSREKLRHIFLLGGCDGARGERHYFTDFATSVPDDCLILTLACGKYRFNKLEFGDIEGLPRLVDAGQCNDAYSAIILAVTLAEKLGCGVNDLPLSLVLSWFEQKAIVILLTLLSLGVKNIVTGPTAPGFLTPDLLAVLNEKFGLRSITTVEEDMKQLLNA.

Residues cysteine 3, cysteine 6, cysteine 18, and cysteine 25 each coordinate [2Fe-2S] cluster. Hybrid [4Fe-2O-2S] cluster is bound by residues histidine 249, glutamate 273, cysteine 317, cysteine 405, cysteine 433, cysteine 458, glutamate 492, and lysine 494. Cysteine 405 carries the post-translational modification Cysteine persulfide.

Belongs to the HCP family. [2Fe-2S] cluster is required as a cofactor. Hybrid [4Fe-2O-2S] cluster serves as cofactor.

It localises to the cytoplasm. It catalyses the reaction A + NH4(+) + H2O = hydroxylamine + AH2 + H(+). Functionally, catalyzes the reduction of hydroxylamine to form NH(3) and H(2)O. The sequence is that of Hydroxylamine reductase from Shigella flexneri serotype 5b (strain 8401).